The primary structure comprises 187 residues: Putative lipoprotein LppJ (187 aa).

The N-terminal stretch at 1-28 (MPHSTADRRLRLTRQALLAAAVAPLLAG) is a signal peptide. Cysteine 29 is lipidated: N-palmitoyl cysteine. Residue cysteine 29 is the site of S-diacylglycerol cysteine attachment.

The protein localises to the cell membrane. In Mycobacterium bovis (strain ATCC BAA-935 / AF2122/97), this protein is Putative lipoprotein LppJ (lppJ).